The primary structure comprises 446 residues: Transcription factor SOX-8 (446 aa).

Disordered stretches follow at residues 1–58, 155–259, and 318–378; these read MLDM…DPAE, AERL…RQNI, and HKSA…PFAG. A compositionally biased stretch (gly residues) spans 40-53; it reads EGLGRAGVAVGGAR. The interval 58-100 is dimerization (DIM); the sequence is EAADERFPACIRDAVSQVLKGYDWSLVPMPVRGGGGGALKAKP. A DNA-binding region (HMG box) is located at residues 102-170; that stretch reads VKRPMNAFMV…QHKKDHPDYK (69 aa). Basic and acidic residues-rich tracts occupy residues 155–171, 210–219, and 242–253; these read AERLRVQHKKDHPDYKY, DGHHHGDHTG, and PELKLEGRRPVD. The transactivation domain (TAM) stretch occupies residues 224 to 298; sequence PPTPPTTPKT…LPLGGPAPPE (75 aa). A transactivation domain (TAC) region spans residues 335 to 446; that stretch reads RPHIKTEQPS…QPVYTTLTRP (112 aa). Residues 362 to 378 show a composition bias toward low complexity; sequence SGQSSATPAAPAGPFAG. The short motif at 400 to 408 is the 9aaTAD element; that stretch reads PGLYQYPCF. The segment at 425 to 446 is disordered; sequence LPPAHSPTSHWDQPVYTTLTRP. Positions 430–446 are enriched in polar residues; sequence SPTSHWDQPVYTTLTRP.

The protein resides in the nucleus. In terms of biological role, transcription factor that may play a role in central nervous system, limb and facial development. May be involved in male sex determination. Binds the consensus motif 5'-[AT][AT]CAA[AT]G-3'. This chain is Transcription factor SOX-8, found in Homo sapiens (Human).